A 115-amino-acid chain; its full sequence is NADH-ubiquinone oxidoreductase chain 3 (115 aa).

The next 3 helical transmembrane spans lie at 3–23 (LYTVIFINILLSLTLILVAFW), 55–75 (FFLVAITFLLFDLEIALLLPL), and 86–106 (TMMIMAFILVTILSLGLAYEW).

This sequence belongs to the complex I subunit 3 family. As to quaternary structure, core subunit of respiratory chain NADH dehydrogenase (Complex I) which is composed of 45 different subunits. Interacts with TMEM186. Interacts with TMEM242.

It is found in the mitochondrion inner membrane. The enzyme catalyses a ubiquinone + NADH + 5 H(+)(in) = a ubiquinol + NAD(+) + 4 H(+)(out). Core subunit of the mitochondrial membrane respiratory chain NADH dehydrogenase (Complex I) which catalyzes electron transfer from NADH through the respiratory chain, using ubiquinone as an electron acceptor. Essential for the catalytic activity of complex I. This is NADH-ubiquinone oxidoreductase chain 3 from Mus musculus (Mouse).